The primary structure comprises 118 residues: Large ribosomal subunit protein bL20 (118 aa).

This sequence belongs to the bacterial ribosomal protein bL20 family.

Functionally, binds directly to 23S ribosomal RNA and is necessary for the in vitro assembly process of the 50S ribosomal subunit. It is not involved in the protein synthesizing functions of that subunit. This chain is Large ribosomal subunit protein bL20, found in Psychrobacter sp. (strain PRwf-1).